We begin with the raw amino-acid sequence, 424 residues long: Probable biofilm formation methyltransferase WspC (424 aa).

One can recognise a CheR-type methyltransferase domain in the interval 1–263 (MNEQRFFRFL…IAQSFAYVRH (263 aa)). S-adenosyl-L-methionine is bound by residues Thr-68, Arg-72, Glu-109, Asp-133, 187–188 (NV), and 206–207 (RN). The TPR repeat unit spans residues 355 to 388 (AQVYYWLGLLSDTEGDAQQALSHYRKALYLEPQH).

Monomer. The TPR repeat does not mediate self-association.

Its function is as follows. Involved in biofilm formation. The chain is Probable biofilm formation methyltransferase WspC (wspC) from Pseudomonas putida (strain ATCC 47054 / DSM 6125 / CFBP 8728 / NCIMB 11950 / KT2440).